The chain runs to 266 residues: Glucosamine-6-phosphate deaminase (266 aa).

The active-site Proton acceptor; for enolization step is D72. The active-site For ring-opening step is D141. The active-site Proton acceptor; for ring-opening step is H143. E148 acts as the For ring-opening step in catalysis.

Belongs to the glucosamine/galactosamine-6-phosphate isomerase family. NagB subfamily. Homohexamer; trimer of disulfide-linked dimers.

The catalysed reaction is alpha-D-glucosamine 6-phosphate + H2O = beta-D-fructose 6-phosphate + NH4(+). The protein operates within amino-sugar metabolism; N-acetylneuraminate degradation; D-fructose 6-phosphate from N-acetylneuraminate: step 5/5. Allosterically activated by N-acetylglucosamine 6-phosphate (GlcNAc6P). Its function is as follows. Catalyzes the reversible isomerization-deamination of glucosamine 6-phosphate (GlcN6P) to form fructose 6-phosphate (Fru6P) and ammonium ion. The sequence is that of Glucosamine-6-phosphate deaminase from Shigella flexneri serotype 5b (strain 8401).